We begin with the raw amino-acid sequence, 372 residues long: Peroxisomal biogenesis factor 3 (372 aa).

The Cytoplasmic portion of the chain corresponds to 1 to 15; that stretch reads MLRSMWNFLKRHKKK. The targeting to peroxisomes stretch occupies residues 1–45; it reads MLRSMWNFLKRHKKKCIFLGTVLGGVYILGKYGQKKIREIQEREA. Residues 16–36 traverse the membrane as a helical segment; that stretch reads CIFLGTVLGGVYILGKYGQKK. Topologically, residues 37 to 116 are peroxisomal; the sequence is IREIQEREAA…LKIISFTRSI (80 aa). A helical transmembrane segment spans residues 117-140; the sequence is VAVYSTCMLVVLLRVQLNIIGGYI. The interaction with PEX19 stretch occupies residues 120 to 136; the sequence is YSTCMLVVLLRVQLNII. Over 141–372 the chain is Cytoplasmic; the sequence is YLDNATVGKN…AFSTPQQLEK (232 aa).

The protein belongs to the peroxin-3 family. In terms of assembly, interacts with PEX19. In terms of tissue distribution, identified in all tissues analyzed, with the strongest expression in liver and in testis.

The protein localises to the peroxisome membrane. Involved in peroxisome biosynthesis and integrity. Assembles membrane vesicles before the matrix proteins are translocated. As a docking factor for PEX19, is necessary for the import of peroxisomal membrane proteins in the peroxisomes. This chain is Peroxisomal biogenesis factor 3 (Pex3), found in Mus musculus (Mouse).